A 120-amino-acid polypeptide reads, in one-letter code: Large ribosomal subunit protein bL19 (120 aa).

It belongs to the bacterial ribosomal protein bL19 family.

Its function is as follows. This protein is located at the 30S-50S ribosomal subunit interface and may play a role in the structure and function of the aminoacyl-tRNA binding site. The protein is Large ribosomal subunit protein bL19 of Renibacterium salmoninarum (strain ATCC 33209 / DSM 20767 / JCM 11484 / NBRC 15589 / NCIMB 2235).